Reading from the N-terminus, the 335-residue chain is Teichoic acids export ATP-binding protein TagH (335 aa).

In terms of domain architecture, ABC transporter spans 26 to 246 (IKGLFMPKSQ…YDEFVKWFNK (221 aa)). Position 60–67 (60–67 (GINGSGKS)) interacts with ATP.

It belongs to the ABC transporter superfamily. Teichoic acids exporter (TC 3.A.1.104.1) family. In terms of assembly, the complex is composed of two ATP-binding proteins (TagH) and two transmembrane proteins (TagG).

It is found in the cell membrane. The catalysed reaction is ATP + H2O + teichoic acidSide 1 = ADP + phosphate + teichoic acidSide 2.. Its function is as follows. Part of the ABC transporter complex TagGH involved in teichoic acids export. Responsible for energy coupling to the transport system. The protein is Teichoic acids export ATP-binding protein TagH of Listeria monocytogenes serotype 4b (strain F2365).